The primary structure comprises 390 residues: Large ribosomal subunit protein uL3y (390 aa).

Residues 1–36 (MSHRKFEHPRHGSLGFLPRKRASRHRGKVKAFPKDD) are disordered. Over residues 18–31 (PRKRASRHRGKVKA) the composition is skewed to basic residues.

This sequence belongs to the universal ribosomal protein uL3 family.

Its subcellular location is the cytoplasm. This Arabidopsis thaliana (Mouse-ear cress) protein is Large ribosomal subunit protein uL3y (ARP2).